Here is a 426-residue protein sequence, read N- to C-terminus: Actin-like protein 6B (426 aa).

Residues 39–82 (TTVGLLAAEEGGGLELEGEKEKKGKIFHIDTNALHVPRDGAEVM) form an essential for mediating its function in dendritic development; may contribute to neuronal-specific targeting region.

This sequence belongs to the actin family. In terms of assembly, component of the multiprotein chromatin-remodeling complexes SWI/SNF: SWI/SNF-A (BAF), SWI/SNF-B (PBAF) and related complexes. The canonical complex contains a catalytic subunit (either SMARCA4/BRG1/BAF190A or SMARCA2/BRM/BAF190B) and at least SMARCE1, ACTL6A/BAF53, SMARCC1/BAF155, SMARCC2/BAF170, and SMARCB1/SNF5/BAF47. Other subunits specific to each of the complexes may also be present permitting several possible combinations developmentally and tissue specific. Component of the BAF complex, which includes at least actin (ACTB), ARID1A/BAF250A, ARID1B/BAF250B, SMARCA2/BRM, SMARCA4/BRG1/BAF190A, ACTL6A/BAF53, ACTL6B/BAF53B, SMARCE1/BAF57, SMARCC1/BAF155, SMARCC2/BAF170, SMARCB1/SNF5/INI1, and one or more SMARCD1/BAF60A, SMARCD2/BAF60B, or SMARCD3/BAF60C. Component of neuron-specific chromatin remodeling complex (nBAF complex) composed of at least, ARID1A/BAF250A or ARID1B/BAF250B, SMARCD1/BAF60A or SMARCD2/BAF60B or SMARCD3/BAF60C, SMARCA2/BRM/BAF190B, SMARCA4/BRG1/BAF190A, SMARCB1/BAF47, SMARCC1/BAF155, SMARCE1/BAF57, SMARCC2/BAF170, DPF1/BAF45B, DPF3/BAF45C, ACTL6B/BAF53B and actin (ACTB). Note that the nBAF complex is polymorphic in regard to the ATPase, SMARCA2 and SMARCA4 occupying mutually exclusive positions. May be a component of the SWI/SNF-B (PBAF) chromatin remodeling complex, at least composed of SMARCA4/BRG1, SMARCB1/BAF47/SNF5, ACTL6A/BAF53A or ACTL6B/BAF53B, SMARCE1/BAF57, SMARCD1/BAF60A, SMARCD2/BAF60B, perhaps SMARCD3/BAF60C, SMARCC1/BAF155, SMARCC2/BAF170, PBRM1/BAF180, ARID2/BAF200 and actin.

It localises to the nucleus. Involved in transcriptional activation and repression of select genes by chromatin remodeling (alteration of DNA-nucleosome topology). Component of SWI/SNF chromatin remodeling complexes that carry out key enzymatic activities, changing chromatin structure by altering DNA-histone contacts within a nucleosome in an ATP-dependent manner. Belongs to the neuron-specific chromatin remodeling complex (nBAF complex), as such plays a role in remodeling mononucleosomes in an ATP-dependent fashion, and is required for postmitotic neural development and dendritic outgrowth. During neural development a switch from a stem/progenitor to a postmitotic chromatin remodeling mechanism occurs as neurons exit the cell cycle and become committed to their adult state. The transition from proliferating neural stem/progenitor cells to postmitotic neurons requires a switch in subunit composition of the npBAF and nBAF complexes. As neural progenitors exit mitosis and differentiate into neurons, npBAF complexes which contain ACTL6A/BAF53A and PHF10/BAF45A, are exchanged for homologous alternative ACTL6B/BAF53B and DPF1/BAF45B or DPF3/BAF45C subunits in neuron-specific complexes (nBAF). The npBAF complex is essential for the self-renewal/proliferative capacity of the multipotent neural stem cells. The nBAF complex along with CREST plays a role regulating the activity of genes essential for dendrite growth. ACTL6B/BAF53B is not essential for assembly of the nBAF complex but is required for targeting the complex and CREST to the promoter of genes essential for dendritic growth. Essential for neuronal maturation and dendrite development. The polypeptide is Actin-like protein 6B (ACTL6B) (Bos taurus (Bovine)).